The sequence spans 299 residues: 4-diphosphocytidyl-2-C-methyl-D-erythritol kinase (299 aa).

Lys17 is an active-site residue. An ATP-binding site is contributed by Pro103–Gly113. Asp145 is an active-site residue.

Belongs to the GHMP kinase family. IspE subfamily.

The enzyme catalyses 4-CDP-2-C-methyl-D-erythritol + ATP = 4-CDP-2-C-methyl-D-erythritol 2-phosphate + ADP + H(+). It participates in isoprenoid biosynthesis; isopentenyl diphosphate biosynthesis via DXP pathway; isopentenyl diphosphate from 1-deoxy-D-xylulose 5-phosphate: step 3/6. Functionally, catalyzes the phosphorylation of the position 2 hydroxy group of 4-diphosphocytidyl-2C-methyl-D-erythritol. This is 4-diphosphocytidyl-2-C-methyl-D-erythritol kinase from Bartonella tribocorum (strain CIP 105476 / IBS 506).